The chain runs to 632 residues: PWWP domain-containing protein 5 (632 aa).

Residues 97–158 form the PWWP domain; sequence DSDLVWAKLR…ASQIKPFHQN (62 aa). Residues 310–452 are disordered; sequence RKTDYKDNAE…AERKISSPDE (143 aa). 4 stretches are compositionally biased toward basic and acidic residues: residues 313-326, 339-364, 371-383, and 425-449; these read DYKD…EKTL, STEK…GKSE, QQKE…HSNE, and KSTE…KISS. The Nuclear localization signal motif lies at 352-359; it reads KRKVESSE.

This sequence belongs to the PDP family. In terms of assembly, component of the PRC2 (polycomb repressive complex 2) complex which regulates histone methylation on histone H3K27.

It is found in the nucleus. Functionally, may influence gene expression by regulating the function of the PRC2 complex and modulating H3K27me3 level. The sequence is that of PWWP domain-containing protein 5 from Arabidopsis thaliana (Mouse-ear cress).